Reading from the N-terminus, the 344-residue chain is MITDTAALQRTIEHREIFHDEMLHLMRRIMSGEMSPVMIAALAVGLRVKKESIGEIAAAATVMREFATPVPVADTEHLVDLCGTGGDAAHTFNISTTAMFVAAAAGARVAKHGGRSVSSTSGSADVLEALGASIDLAPAQVAECLAESGIGFMFAPNHHPAMKHAGPVRKELGVRTIFNILGPLTNPAGAPNQLMGVFHPDLVGIQVRVLQRLGSRHVLVVYGMNGMDEISLSGETLIGELKDGEVREYTVHPSDFGLPVYDTRGLKVASKDESVGCIRRALADEAGPVRDIVLLNAGAALYAADVAPSIGEGVRQAREAVASGAAAKTLERFVATTRRLKGAA.

5-phospho-alpha-D-ribose 1-diphosphate-binding positions include glycine 83, 86 to 87 (GD), threonine 91, 93 to 96 (NIST), 111 to 119 (KHGGRSVSS), and serine 123. Glycine 83 is a binding site for anthranilate. Serine 95 provides a ligand contact to Mg(2+). Residue arginine 169 coordinates anthranilate. Residues aspartate 228 and glutamate 229 each coordinate Mg(2+).

Belongs to the anthranilate phosphoribosyltransferase family. Homodimer. Requires Mg(2+) as cofactor.

The enzyme catalyses N-(5-phospho-beta-D-ribosyl)anthranilate + diphosphate = 5-phospho-alpha-D-ribose 1-diphosphate + anthranilate. It participates in amino-acid biosynthesis; L-tryptophan biosynthesis; L-tryptophan from chorismate: step 2/5. Functionally, catalyzes the transfer of the phosphoribosyl group of 5-phosphorylribose-1-pyrophosphate (PRPP) to anthranilate to yield N-(5'-phosphoribosyl)-anthranilate (PRA). In Methylibium petroleiphilum (strain ATCC BAA-1232 / LMG 22953 / PM1), this protein is Anthranilate phosphoribosyltransferase.